Consider the following 421-residue polypeptide: Functional amyloid transporter FapF (421 aa).

Positions 1–24 (MTQTLSLRAVLCATTLVSPFLAQA) are cleaved as a signal peptide. The stretch at 23-64 (QAATESEVEALKKELLELRQRYEAQQNALMVLEQRVRQVEAQ) forms a coiled coil.

Belongs to the amyloid transporter (TC 9.B.153) family.

It localises to the secreted. The protein resides in the cell surface. Its subcellular location is the cell outer membrane. Functionally, transports fibril components across the outer membrane. Upon overexpression of the endogenous six-gene locus (fapA-fapF), cells form large clumps during liquid growth, make large amounts of biofilm and produce amyloid fibrils. This Pseudomonas aeruginosa (strain ATCC 15692 / DSM 22644 / CIP 104116 / JCM 14847 / LMG 12228 / 1C / PRS 101 / PAO1) protein is Functional amyloid transporter FapF.